A 633-amino-acid polypeptide reads, in one-letter code: Phosphomethylpyrimidine synthase (633 aa).

Residues Asn-245, Met-274, Tyr-303, His-339, 359–361 (SRG), 400–403 (DGLR), and Glu-439 contribute to the substrate site. His-443 is a binding site for Zn(2+). A substrate-binding site is contributed by Tyr-466. His-507 serves as a coordination point for Zn(2+). Residues Cys-587, Cys-590, and Cys-595 each coordinate [4Fe-4S] cluster.

Belongs to the ThiC family. As to quaternary structure, homodimer. Requires [4Fe-4S] cluster as cofactor.

It carries out the reaction 5-amino-1-(5-phospho-beta-D-ribosyl)imidazole + S-adenosyl-L-methionine = 4-amino-2-methyl-5-(phosphooxymethyl)pyrimidine + CO + 5'-deoxyadenosine + formate + L-methionine + 3 H(+). Its pathway is cofactor biosynthesis; thiamine diphosphate biosynthesis. In terms of biological role, catalyzes the synthesis of the hydroxymethylpyrimidine phosphate (HMP-P) moiety of thiamine from aminoimidazole ribotide (AIR) in a radical S-adenosyl-L-methionine (SAM)-dependent reaction. This is Phosphomethylpyrimidine synthase from Neisseria meningitidis serogroup C (strain 053442).